Here is a 909-residue protein sequence, read N- to C-terminus: Probable DNA-directed RNA polymerase subunit beta (909 aa).

Belongs to the RNA polymerase beta chain family.

It catalyses the reaction RNA(n) + a ribonucleoside 5'-triphosphate = RNA(n+1) + diphosphate. In terms of biological role, required for late and very late gene expression. May be a component of the novel RNA polymerase activity induced by baculovirus infection. The protein is Probable DNA-directed RNA polymerase subunit beta (LEF-8) of Lepidoptera (butterflies and moths).